The following is a 426-amino-acid chain: D-tagatose-1,6-bisphosphate aldolase subunit KbaZ (426 aa).

Belongs to the GatZ/KbaZ family. KbaZ subfamily. In terms of assembly, forms a complex with KbaY.

It functions in the pathway carbohydrate metabolism; D-tagatose 6-phosphate degradation; D-glyceraldehyde 3-phosphate and glycerone phosphate from D-tagatose 6-phosphate: step 2/2. Its function is as follows. Component of the tagatose-1,6-bisphosphate aldolase KbaYZ that is required for full activity and stability of the Y subunit. Could have a chaperone-like function for the proper and stable folding of KbaY. When expressed alone, KbaZ does not show any aldolase activity. The sequence is that of D-tagatose-1,6-bisphosphate aldolase subunit KbaZ from Escherichia coli (strain SMS-3-5 / SECEC).